A 1848-amino-acid polypeptide reads, in one-letter code: Histone-lysine N-methyltransferase, H3 lysine-79 specific (1848 aa).

The 318-residue stretch at 19–336 folds into the DOT1 domain; it reads DVISFAWPLQ…ILERYFQRLK (318 aa). S-adenosyl-L-methionine is bound by residues 142–145, 165–174, Glu192, and 228–229; these read YGET, FIDLGSGVGQ, and DF. Disordered stretches follow at residues 338-537, 558-593, 886-908, 960-996, 1033-1075, 1165-1190, 1221-1333, 1345-1374, 1432-1463, 1486-1508, 1529-1559, 1573-1604, 1637-1713, and 1731-1757; these read KGGN…TRKA, AVSV…ARGR, LNSV…WPEV, PPPA…QMTL, LNED…AQSL, HMAS…RSSV, QRQQ…TQVS, QEKL…KTIG, VHVR…GGAA, ARAN…GRDY, EQQQ…PPLE, KYKE…LPTH, SPLA…VDPP, and QLSH…LQLT. Residues 339-360 are compositionally biased toward basic and acidic residues; the sequence is GGNDHESVGTVRTTRDRAKREA. Basic residues predominate over residues 364–373; it reads QHHHNNHHSN. The span at 391–405 shows a compositional bias: low complexity; the sequence is ATATAAHQQRHQSQS. The segment covering 419–428 has biased composition (polar residues); sequence SGQQAASKTR. Low complexity-rich tracts occupy residues 429–439 and 453–474; these read QQLQHQHNQQQ and DATN…ASNG. Ser491, Ser492, and Ser494 each carry phosphoserine. The segment covering 507-518 has biased composition (gly residues); it reads GSNGGSIGGGSV. Basic residues-rich tracts occupy residues 526–535 and 582–593; these read TQKKRKKLTR and RKGRMKKGARGR. A compositionally biased stretch (low complexity) spans 1221 to 1235; it reads QRQQMRVEEQQQQQQ. Basic residues predominate over residues 1236–1263; it reads HQHHHHHHHHHPQHRLPQHVQHQHPHQH. Low complexity predominate over residues 1289 to 1300; it reads EPPQTQPLELLP. A phosphoserine mark is found at Ser1318, Ser1324, and Ser1325. Positions 1532–1545 are enriched in low complexity; sequence QKQSKGAGSAGSSS. The segment covering 1574-1583 has biased composition (basic and acidic residues); it reads YKEETEERQR. Low complexity-rich tracts occupy residues 1585–1598 and 1681–1696; these read AAAA…PPAG and HDAT…SSSS. Positions 1697–1706 are enriched in polar residues; sequence CGRRSNSNNG.

This sequence belongs to the class I-like SAM-binding methyltransferase superfamily. DOT1 family. In terms of tissue distribution, broadly expressed in most tissues. Expressed in a large subset of neurons and in a small subset of glial cells.

The protein resides in the nucleus. The enzyme catalyses L-lysyl(79)-[histone H3] + 3 S-adenosyl-L-methionine = N(6),N(6),N(6)-trimethyl-L-lysyl(79)-[histone H3] + 3 S-adenosyl-L-homocysteine + 3 H(+). Its function is as follows. Histone methyltransferase. Methylates 'Lys-79' of histone H3. Required for Polycomb Group (PcG) and trithorax Group (trxG) maintenance of expression. Also involved in telomeric silencing but do not in centric heterochromatin. Probably participates in pairing sensitivity. This Drosophila melanogaster (Fruit fly) protein is Histone-lysine N-methyltransferase, H3 lysine-79 specific (gpp).